A 115-amino-acid polypeptide reads, in one-letter code: Large ribosomal subunit protein bL19 (115 aa).

Belongs to the bacterial ribosomal protein bL19 family.

Functionally, this protein is located at the 30S-50S ribosomal subunit interface and may play a role in the structure and function of the aminoacyl-tRNA binding site. This chain is Large ribosomal subunit protein bL19, found in Tolumonas auensis (strain DSM 9187 / NBRC 110442 / TA 4).